The primary structure comprises 548 residues: Chaperonin GroEL 1 (548 aa).

ATP contacts are provided by residues Thr30–Pro33, Lys51, Asp87–Thr91, Gly415, Asn479–Ala481, and Asp495.

The protein belongs to the chaperonin (HSP60) family. In terms of assembly, forms a cylinder of 14 subunits composed of two heptameric rings stacked back-to-back. Interacts with the co-chaperonin GroES.

It is found in the cytoplasm. It carries out the reaction ATP + H2O + a folded polypeptide = ADP + phosphate + an unfolded polypeptide.. Functionally, together with its co-chaperonin GroES, plays an essential role in assisting protein folding. The GroEL-GroES system forms a nano-cage that allows encapsulation of the non-native substrate proteins and provides a physical environment optimized to promote and accelerate protein folding. This is Chaperonin GroEL 1 from Vibrio harveyi (Beneckea harveyi).